Here is a 253-residue protein sequence, read N- to C-terminus: Testis-expressed protein 101 (253 aa).

The first 24 residues, methionine 1–serine 24, serve as a signal peptide directing secretion. N-linked (GlcNAc...) asparagine glycans are attached at residues asparagine 44, asparagine 112, asparagine 117, asparagine 121, and asparagine 162. Residues glutamate 53–asparagine 117 enclose the UPAR/Ly6 1 domain. Residues cysteine 143–leucine 218 enclose the UPAR/Ly6 2 domain. A lipid anchor (GPI-anchor amidated serine) is attached at serine 226. Residues arginine 227 to proline 253 constitute a propeptide, removed in mature form.

Interacts with VAMP3. Interacts with LY6K. Interacts with DPEP3; co-localized on the cell surface of spermatocytes, spermatids, and testicular spermatozoa, co-localized only in cytoplasmic droplets of caput and corpus epididymal sperm. Interacts with ADAM5. In terms of processing, N-glycosylated; by high mannose and/or biantennary complex and/or certain types of hybrid oligosaccharides; possesses different oligosaccharides chains according to its subcellular localization in the testis. Sheds from membrane raft by ACE and released from the cell surface of epididymal sperm while it passes through the caput epididymis leading to disappearance of TEX101 on spermatozoa; is essential to produce fertile spermatozoa.

It localises to the cell membrane. It is found in the membrane raft. The protein resides in the cytoplasmic vesicle. The protein localises to the secretory vesicle. Its subcellular location is the acrosome. It localises to the secreted. In terms of biological role, plays a role in fertilization by controlling binding of sperm to zona pellucida and migration of spermatozoa into the oviduct. May play a role in signal transduction and promote protein tyrosine phosphorylation. This chain is Testis-expressed protein 101, found in Cricetulus griseus (Chinese hamster).